We begin with the raw amino-acid sequence, 195 residues long: Peptidyl-tRNA hydrolase (195 aa).

Tyrosine 17 contributes to the tRNA binding site. Histidine 22 serves as the catalytic Proton acceptor. The tRNA site is built by tyrosine 68, asparagine 70, and asparagine 116.

The protein belongs to the PTH family. As to quaternary structure, monomer.

The protein localises to the cytoplasm. The catalysed reaction is an N-acyl-L-alpha-aminoacyl-tRNA + H2O = an N-acyl-L-amino acid + a tRNA + H(+). Functionally, hydrolyzes ribosome-free peptidyl-tRNAs (with 1 or more amino acids incorporated), which drop off the ribosome during protein synthesis, or as a result of ribosome stalling. In terms of biological role, catalyzes the release of premature peptidyl moieties from peptidyl-tRNA molecules trapped in stalled 50S ribosomal subunits, and thus maintains levels of free tRNAs and 50S ribosomes. This chain is Peptidyl-tRNA hydrolase, found in Shewanella sp. (strain MR-4).